The chain runs to 184 residues: MITEGAARRVHIIQGEYKVLSDPNAVLSTILGSCVAACLRDPVAGIGGMNHFLLPGSATSPTSGGDATRYGVHLMELLINGLLKQGARRDRLEAKIFGGAKTISTFSNVGEQNAAFAMQFLRDEGIPVVGSSTGGEHGRKLEYWPVSGRARQYPLTGAETQRTVALEQRPAAPQKPVETSIEFF.

This sequence belongs to the CheD family.

The enzyme catalyses L-glutaminyl-[protein] + H2O = L-glutamyl-[protein] + NH4(+). Probably deamidates glutamine residues to glutamate on methyl-accepting chemotaxis receptors (MCPs), playing an important role in chemotaxis. This chain is Probable chemoreceptor glutamine deamidase CheD, found in Rhizobium etli (strain CIAT 652).